Consider the following 487-residue polypeptide: Homeobox protein homothorax (487 aa).

Disordered regions lie at residues 25 to 49 (YDPH…HMTH), 210 to 292 (DTTK…SSLN), and 333 to 369 (NFGT…QKKR). Residues 127 to 211 (GGDVCSSESF…IDLVIDERDT (85 aa)) enclose the MEIS N-terminal domain. 2 stretches are compositionally biased toward polar residues: residues 227–237 (NADSTSHTDGA) and 333–345 (NFGT…ASNA). The homeobox; TALE-type DNA-binding region spans 365 to 427 (NQKKRGIFPK…NARRRIVQPM (63 aa)).

It belongs to the TALE/MEIS homeobox family. In terms of assembly, interacts with exd; required for nuclear translocation of exd. As to expression, in the wing disk, the expression is present in the regions corresponding to notum, wing hinge and ventral pleura. In the leg disk, the expression is in the periphery region, corresponding to the proximal segments of the legs. In the antennal disk, the expression is in all but the arista region. In the eye disk, the expression is strong in the anterior region surrounding the eye field, including the regions corresponding to ptilinum, ocellus and head capsules, and weak in the posterior and lateral margins of the eye disk. Expressed specifically in maturating inner photoreceptors of the DRA and maintained through adulthood.

Its subcellular location is the nucleus. All isoforms are required for patterning of the embryonic cuticle. Acts with exd to delimit the eye field and prevent inappropriate eye development. Isoforms that carry the homeodomain are required for proper localization of chordotonal organs within the peripheral nervous system and antennal identity; required to activate antennal-specific genes, such as sal and to repress the leg-like expression of dac. Necessary for the nuclear localization of the essential HOX cofactor, extradenticle (exd). Both necessary and sufficient for inner photoreceptors to adopt the polarization-sensitive 'dorsal rim area' (DRA) of the eye fate instead of the color-sensitive default state. This occurs by increasing rhabdomere size and uncoupling R7-R8 communication to allow both cells to express the same opsin rather than different ones as required for color vision. The polypeptide is Homeobox protein homothorax (Drosophila melanogaster (Fruit fly)).